The sequence spans 821 residues: V-type proton ATPase subunit a3 (821 aa).

An N-acetylalanine modification is found at Ala2. Residues Ala2–Thr421 are Cytoplasmic-facing. A coiled-coil region spans residues Lys97–Ala144. Position 174 is a phosphoserine (Ser174). Residues Phe422 to Ala442 form a helical membrane-spanning segment. The Vacuolar segment spans residues Thr443–Arg469. A helical membrane pass occupies residues Tyr470 to Phe490. The Cytoplasmic segment spans residues Ser491–Lys548. The chain crosses the membrane as a helical span at residues Met549 to Ala569. The Vacuolar segment spans residues Arg570 to Gln581. A helical transmembrane segment spans residues Phe582–Ile602. Over Lys603–Gln640 the chain is Cytoplasmic. Residues Leu641–Ile661 traverse the membrane as a helical segment. Residues Leu662 to Pro758 lie on the Vacuolar side of the membrane. A helical membrane pass occupies residues Leu759–Met779. At Glu780–Glu821 the chain is on the cytoplasmic side.

It belongs to the V-ATPase 116 kDa subunit family. In terms of assembly, V-ATPase is a heteromultimeric enzyme composed of a peripheral catalytic V1 complex (components A to H) attached to an integral membrane V0 proton pore complex (components: a, c, c'', d and e). Expressed in etiolated seedlings hypocotyls.

The protein resides in the vacuole membrane. Essential component of the vacuolar proton pump (V-ATPase), a multimeric enzyme that catalyzes the translocation of protons across the membranes. Required for assembly and activity of the V-ATPase. Involved in vacuolar nutrient storage (e.g. accumulation and storage of nitrate) and in tolerance to some toxic ions (e.g. zinc ions sequestration in vacuoles). This chain is V-type proton ATPase subunit a3 (VHA-a3), found in Arabidopsis thaliana (Mouse-ear cress).